We begin with the raw amino-acid sequence, 332 residues long: Ferredoxin--NADP reductase 2 (332 aa).

Residues aspartate 33, glutamine 41, tyrosine 46, valine 86, isoleucine 121, aspartate 282, and serine 325 each contribute to the FAD site.

This sequence belongs to the ferredoxin--NADP reductase type 2 family. In terms of assembly, homodimer. It depends on FAD as a cofactor.

It carries out the reaction 2 reduced [2Fe-2S]-[ferredoxin] + NADP(+) + H(+) = 2 oxidized [2Fe-2S]-[ferredoxin] + NADPH. This chain is Ferredoxin--NADP reductase 2, found in Sulfolobus acidocaldarius (strain ATCC 33909 / DSM 639 / JCM 8929 / NBRC 15157 / NCIMB 11770).